The chain runs to 104 residues: Large ribosomal subunit protein uL24 (104 aa).

This sequence belongs to the universal ribosomal protein uL24 family. Part of the 50S ribosomal subunit.

One of two assembly initiator proteins, it binds directly to the 5'-end of the 23S rRNA, where it nucleates assembly of the 50S subunit. In terms of biological role, one of the proteins that surrounds the polypeptide exit tunnel on the outside of the subunit. The sequence is that of Large ribosomal subunit protein uL24 from Methylorubrum extorquens (strain PA1) (Methylobacterium extorquens).